Reading from the N-terminus, the 447-residue chain is GTPase Der (447 aa).

EngA-type G domains are found at residues 3–167 and 181–354; these read PVIA…FAER and TRIA…AAAM. Residues 9–16, 56–60, 119–122, 187–194, 234–238, and 299–302 each bind GTP; these read GRPNVGKS, DTGGF, NKAE, DTAGL, and NKWD. The 85-residue stretch at 355-439 folds into the KH-like domain; the sequence is VKLPTPKLTR…PLRIEFRTNK (85 aa).

This sequence belongs to the TRAFAC class TrmE-Era-EngA-EngB-Septin-like GTPase superfamily. EngA (Der) GTPase family. As to quaternary structure, associates with the 50S ribosomal subunit.

In terms of biological role, GTPase that plays an essential role in the late steps of ribosome biogenesis. In Ralstonia pickettii (strain 12J), this protein is GTPase Der.